The following is a 66-amino-acid chain: Large ribosomal subunit protein bL33c (66 aa).

This sequence belongs to the bacterial ribosomal protein bL33 family.

It is found in the plastid. The protein localises to the chloroplast. The polypeptide is Large ribosomal subunit protein bL33c (Chloranthus spicatus (Chulantree)).